The following is a 425-amino-acid chain: Inner membrane protein YqcE (425 aa).

Residues 1–8 (MQHNSYRR) are Cytoplasmic-facing. Residues 9–29 (WITLAIISFSGGVSFDLAYLR) form a helical membrane-spanning segment. The Periplasmic portion of the chain corresponds to 30–48 (YIYQIPMAKFMGFSNTEIG). A helical membrane pass occupies residues 49-69 (LIMSTFGIAAIILYAPSGVIA). At 70-75 (DKFSHR) the chain is on the cytoplasmic side. 2 consecutive transmembrane segments (helical) span residues 76-96 (KMIT…ATYP) and 97-117 (PLWV…LMLW). The Cytoplasmic portion of the chain corresponds to 118–138 (SVSIKAASLLGDHSEQGKIMG). Residues 139–159 (WMEGLRGVGVMSLAVFTMWVF) form a helical membrane-spanning segment. The Periplasmic segment spans residues 160–171 (SRFAPDDSTSLK). A helical membrane pass occupies residues 172–192 (TVIIIYSVVYILLGILCWFFV). The Cytoplasmic portion of the chain corresponds to 193 to 219 (SDNNNLRSANNEEKQSFQLSDILAVLR). A helical membrane pass occupies residues 220 to 240 (ISTTWYCSMVIFGVFTIYAIL). Residues 241–259 (SYSTNYLTEMYGMSLVAAS) are Periplasmic-facing. The chain crosses the membrane as a helical span at residues 260 to 280 (YMGIVINKIFRALCGPLGGII). The Cytoplasmic portion of the chain corresponds to 281 to 291 (TTYSKVKSPTR). Residues 292–312 (VIQILSVLGLLTLTALLVTNS) traverse the membrane as a helical segment. A topological domain (periplasmic) is located at residue Asn313. Residues 314–334 (PQSVAMGIGLILLLGFTCYAS) traverse the membrane as a helical segment. Over 335 to 354 (RGLYWACPGEARTPSYIMGT) the chain is Cytoplasmic. Residues 355–375 (TVGICSVIGFLPDVFVYPIIG) form a helical membrane-spanning segment. Topologically, residues 376 to 388 (HWQDTLPAAEAYR) are periplasmic. The helical transmembrane segment at 389 to 409 (NMWLMGMAALGMVIVFTFLLF) threads the bilayer. At 410-425 (QKIRTADSAPAMASSK) the chain is on the cytoplasmic side.

To E.coli YihN.

The protein resides in the cell inner membrane. The polypeptide is Inner membrane protein YqcE (yqcE) (Escherichia coli (strain K12)).